The primary structure comprises 187 residues: Mitochondrial intermembrane space import and assembly protein 40 (187 aa).

The transit peptide at 1–24 (MFRPASRALLRAPAVARGPASRRL) directs the protein to the mitochondrion. Topologically, residues 25–43 (ISTAPAESKPRSWKNTAVR) are mitochondrial matrix. The chain crosses the membrane as a helical; Signal-anchor for type II membrane protein span at residues 44-61 (LGLAAGAIYYYNTSNVFA). The Mitochondrial intermembrane segment spans residues 62-187 (ENPSFSLNNQ…MDCIEKFKCV (126 aa)). Positions 73–115 (KKNSAEEPLPTLDSIKPRIREERESAAPKPNAEQAPAQELPFG) are disordered. Basic and acidic residues predominate over residues 87–98 (IKPRIREERESA). 2 cysteine pairs are disulfide-bonded: Cys146–Cys148 and Cys167–Cys180. One can recognise a CHCH domain in the interval 154 to 187 (HGPCGEEFKAAFSCFVYSEEEPKGMDCIEKFKCV). The Cx9C motif motif lies at 157–167 (CGEEFKAAFSC).

In terms of assembly, monomer. The cofactor is Cu(2+). Zn(2+) is required as a cofactor.

Its subcellular location is the mitochondrion inner membrane. Required for the import and folding of small cysteine-containing proteins (small Tim) in the mitochondrial intermembrane space (IMS). Forms a redox cycle with ERV1 that involves a disulfide relay system. Precursor proteins to be imported into the IMS are translocated in their reduced form into the mitochondria. The oxidized form of MIA40 forms a transient intermolecular disulfide bridge with the reduced precursor protein, resulting in oxidation of the precursor protein that now contains an intramolecular disulfide bond and is able to undergo folding in the IMS. The chain is Mitochondrial intermembrane space import and assembly protein 40 (mia40) from Aspergillus oryzae (strain ATCC 42149 / RIB 40) (Yellow koji mold).